The following is a 233-amino-acid chain: Translation initiation factor 6 (233 aa).

Belongs to the eIF-6 family.

Functionally, binds to the 50S ribosomal subunit and prevents its association with the 30S ribosomal subunit to form the 70S initiation complex. The chain is Translation initiation factor 6 from Aeropyrum pernix (strain ATCC 700893 / DSM 11879 / JCM 9820 / NBRC 100138 / K1).